The primary structure comprises 60 residues: Sec-independent protein translocase protein TatA (60 aa).

Residues M1–G21 form a helical membrane-spanning segment.

The protein belongs to the TatA/E family. As to quaternary structure, the Tat system comprises two distinct complexes: a TatABC complex, containing multiple copies of TatA, TatB and TatC subunits, and a separate TatA complex, containing only TatA subunits. Substrates initially bind to the TatABC complex, which probably triggers association of the separate TatA complex to form the active translocon.

It is found in the cell membrane. In terms of biological role, part of the twin-arginine translocation (Tat) system that transports large folded proteins containing a characteristic twin-arginine motif in their signal peptide across membranes. TatA could form the protein-conducting channel of the Tat system. The protein is Sec-independent protein translocase protein TatA of Corynebacterium glutamicum (strain R).